We begin with the raw amino-acid sequence, 412 residues long: Probable ribonuclease FAU-1 (412 aa).

This sequence belongs to the FAU-1 family.

Its function is as follows. Probable RNase involved in rRNA stability through maturation and/or degradation of precursor rRNAs. Binds to RNA in loop regions with AU-rich sequences. The polypeptide is Probable ribonuclease FAU-1 (Sulfurisphaera tokodaii (strain DSM 16993 / JCM 10545 / NBRC 100140 / 7) (Sulfolobus tokodaii)).